The chain runs to 610 residues: Phosphoenolpyruvate carboxykinase [GTP] (610 aa).

Residues arginine 82 and 221–223 (YGG) each bind substrate. Mn(2+) contacts are provided by lysine 230 and histidine 250. Serine 272 lines the substrate pocket. 273 to 278 (ACGKTN) is a binding site for GTP. The active site involves cysteine 274. Residue aspartate 297 coordinates Mn(2+). A substrate-binding site is contributed by 387-389 (NSR). Residues arginine 389, arginine 420, and 515–518 (FGDN) each bind GTP.

The protein belongs to the phosphoenolpyruvate carboxykinase [GTP] family. Monomer. Mn(2+) serves as cofactor.

The protein resides in the cytoplasm. The enzyme catalyses oxaloacetate + GTP = phosphoenolpyruvate + GDP + CO2. It participates in carbohydrate biosynthesis; gluconeogenesis. Its function is as follows. Involved in the gluconeogenesis. Catalyzes the conversion of oxaloacetate (OAA) to phosphoenolpyruvate (PEP), the rate-limiting step in the metabolic pathway that produces glucose from lactate and other precursors derived from the citric acid cycle. This chain is Phosphoenolpyruvate carboxykinase [GTP], found in Corynebacterium glutamicum (strain ATCC 13032 / DSM 20300 / JCM 1318 / BCRC 11384 / CCUG 27702 / LMG 3730 / NBRC 12168 / NCIMB 10025 / NRRL B-2784 / 534).